A 305-amino-acid chain; its full sequence is Dihydroorotate dehydrogenase B (NAD(+)), catalytic subunit (305 aa).

Residues serine 23 and 47 to 48 (KG) contribute to the FMN site. Residues lysine 47 and 71–75 (NAIGL) contribute to the substrate site. FMN contacts are provided by asparagine 101 and asparagine 129. Asparagine 129 is a substrate binding site. Cysteine 132 functions as the Nucleophile in the catalytic mechanism. Residues lysine 167 and isoleucine 193 each coordinate FMN. A substrate-binding site is contributed by 194–195 (NT). Residues glycine 219, 245 to 246 (GG), and 267 to 268 (GT) contribute to the FMN site.

It belongs to the dihydroorotate dehydrogenase family. Type 1 subfamily. As to quaternary structure, heterotetramer of 2 PyrK and 2 PyrD type B subunits. The cofactor is FMN.

Its subcellular location is the cytoplasm. The enzyme catalyses (S)-dihydroorotate + NAD(+) = orotate + NADH + H(+). It functions in the pathway pyrimidine metabolism; UMP biosynthesis via de novo pathway; orotate from (S)-dihydroorotate (NAD(+) route): step 1/1. Catalyzes the conversion of dihydroorotate to orotate with NAD(+) as electron acceptor. The protein is Dihydroorotate dehydrogenase B (NAD(+)), catalytic subunit (pyrD) of Geobacter sulfurreducens (strain ATCC 51573 / DSM 12127 / PCA).